Reading from the N-terminus, the 521-residue chain is Protein translocase subunit SecD (521 aa).

6 helical membrane-spanning segments follow: residues 8 to 28, 359 to 379, 388 to 408, 410 to 430, 459 to 479, and 483 to 503; these read LKLASVLGVCLLGLLLCLPNG, AGILSLGVGFLLVVVFMVLFY, IALLANLVLMVAILSLFEATL, LPGMAGMLLTLGMAVDANILI, IVDSNATAFLAHVMLFVFGTG, and GFALTITIGIATTLFTTLLLS.

The protein belongs to the SecD/SecF family. SecD subfamily. In terms of assembly, forms a complex with SecF. Part of the essential Sec protein translocation apparatus which comprises SecA, SecYEG and auxiliary proteins SecDF-YajC and YidC.

The protein resides in the cell inner membrane. Part of the Sec protein translocase complex. Interacts with the SecYEG preprotein conducting channel. SecDF uses the proton motive force (PMF) to complete protein translocation after the ATP-dependent function of SecA. The chain is Protein translocase subunit SecD from Acetobacter pasteurianus (strain NBRC 105184 / IFO 3283-01).